Here is a 229-residue protein sequence, read N- to C-terminus: Small ribosomal subunit protein uS3 (229 aa).

One can recognise a KH type-2 domain in the interval 39-107 (IRKFLKKELY…EVFINIKEEK (69 aa)).

The protein belongs to the universal ribosomal protein uS3 family. In terms of assembly, part of the 30S ribosomal subunit. Forms a tight complex with proteins S10 and S14.

Its function is as follows. Binds the lower part of the 30S subunit head. Binds mRNA in the 70S ribosome, positioning it for translation. The polypeptide is Small ribosomal subunit protein uS3 (Nitratiruptor sp. (strain SB155-2)).